The following is a 697-amino-acid chain: CENP-A multicopy suppressor protein 2 (697 aa).

Residues 351-378 form a GATA-type; atypical zinc finger; that stretch reads CQNCGTIKTANWRNATYMNITLMLCNAC. The tract at residues 443 to 484 is disordered; sequence PLNRLTSLDSTHSAPDPNHISKPSVVNQQKSRGGPRTAKLKN. Positions 445–455 are enriched in polar residues; that stretch reads NRLTSLDSTHS.

As to quaternary structure, interacts with CENP-A.

The protein resides in the nucleus. It localises to the chromosome. It is found in the centromere. In terms of biological role, required for proper chromosome segregation via regulation of CENP-A localization to the centromere. This Schizosaccharomyces pombe (strain 972 / ATCC 24843) (Fission yeast) protein is CENP-A multicopy suppressor protein 2 (ams2).